Consider the following 459-residue polypeptide: Cysteine--tRNA ligase (459 aa).

A Zn(2+)-binding site is contributed by C28. Residues V30–H40 carry the 'HIGH' region motif. Zn(2+) contacts are provided by C209, H234, and E238. The 'KMSKS' region signature appears at K266 to S270. K269 serves as a coordination point for ATP.

This sequence belongs to the class-I aminoacyl-tRNA synthetase family. Monomer. The cofactor is Zn(2+).

It is found in the cytoplasm. The catalysed reaction is tRNA(Cys) + L-cysteine + ATP = L-cysteinyl-tRNA(Cys) + AMP + diphosphate. The protein is Cysteine--tRNA ligase of Shewanella oneidensis (strain ATCC 700550 / JCM 31522 / CIP 106686 / LMG 19005 / NCIMB 14063 / MR-1).